A 185-amino-acid chain; its full sequence is MRKDAIENRQRIEEIAHKLFDEEGVENISMNRIAKELGIGMGTLYRHFKDKSDLCFYVIQRDLNTFITQFKQIKDDYHSDYEVMKVSLDYLLQFKIDNKTLLHCIEAGNNKLRFYQSAFYQELFDFYYDLFKSDDDIFTKFKTDMLLQSLSTSVFAFQIEHRHISIEAYRNYLLNIYLDEVERND.

An HTH tetR-type domain is found at 6–66 (IENRQRIEEI…YVIQRDLNTF (61 aa)). The segment at residues 29 to 48 (SMNRIAKELGIGMGTLYRHF) is a DNA-binding region (H-T-H motif).

The chain is HTH-type transcriptional regulator SAB2452 from Staphylococcus aureus (strain bovine RF122 / ET3-1).